Reading from the N-terminus, the 358-residue chain is Putative myc-like protein MYCLP1 (358 aa).

Disordered stretches follow at residues 150–171 (ACSR…TVKK) and 219–245 (QEGA…DKED). Positions 227–242 (PPKEALEREAPGGKDD) are enriched in basic and acidic residues. Residues 274-326 (WTKKKYHSYLERKRRNDQRSRFLALRDEVPALASCSRVSKVMILVKATEYLHE) form the bHLH domain.

In terms of assembly, efficient DNA binding requires dimerization with another bHLH protein. Binds DNA as a heterodimer with MAX. As to expression, detected in adult testis.

It localises to the nucleus. This is Putative myc-like protein MYCLP1 (MYCLP1) from Homo sapiens (Human).